Reading from the N-terminus, the 387-residue chain is Protein adenylyltransferase VopS (387 aa).

ATP-binding positions include 76–77, 122–124, 353–355, and R359; these read IT, LDS, and GNG. One can recognise a Fido domain in the interval 278 to 387; it reads LNMDNLKELH…NAENSLHGIK (110 aa).

It is found in the secreted. It catalyses the reaction L-tyrosyl-[protein] + ATP = O-(5'-adenylyl)-L-tyrosyl-[protein] + diphosphate. It carries out the reaction L-threonyl-[protein] + ATP = 3-O-(5'-adenylyl)-L-threonyl-[protein] + diphosphate. Adenylyltransferase involved in virulence by mediating the addition of adenosine 5'-monophosphate (AMP) to specific threonine residue of host Rho GTPases RhoA, Rac and Cdc42. The resulting AMPylation prevents the interaction of Rho GTPases with downstream effectors, thereby inhibiting actin assembly in infected cells. This Vibrio parahaemolyticus serotype O3:K6 (strain RIMD 2210633) protein is Protein adenylyltransferase VopS (vopS).